A 286-amino-acid polypeptide reads, in one-letter code: S-adenosylmethionine-dependent methyltransferase UmaA (286 aa).

S-adenosyl-L-methionine is bound by residues 32–33 (YT), 67–75 (LLDIGCGWG), 93–98 (TLSRNQ), and 122–123 (WD). Cysteine 268 is a catalytic residue.

The protein belongs to the CFA/CMAS family.

The protein localises to the cytoplasm. Its function is as follows. Methyltransferase that modifies short-chain fatty acids. In vitro, catalyzes the transfer of the methyl group from S-adenosyl-L-methionine (SAM) to the double bond of phospholipid-linked oleic acid to produce tuberculostearic acid (10-methylstearic-acid or TSA). The sequence is that of S-adenosylmethionine-dependent methyltransferase UmaA from Mycobacterium tuberculosis (strain ATCC 25618 / H37Rv).